We begin with the raw amino-acid sequence, 256 residues long: uncharacterized protein (256 aa).

An N-terminal signal peptide occupies residues 1-24 (MIKRVNKLVIGISLLFLVISITAG). The N-palmitoyl cysteine moiety is linked to residue Cys-25. Cys-25 carries S-diacylglycerol cysteine lipidation.

It belongs to the staphylococcal tandem lipoprotein family.

It is found in the cell membrane. This is an uncharacterized protein from Staphylococcus aureus (strain bovine RF122 / ET3-1).